A 179-amino-acid chain; its full sequence is Fas apoptotic inhibitory molecule 1 (179 aa).

T2 bears the N-acetylthreonine mark.

It belongs to the FAIM1 family. As to expression, widely expressed, with the highest levels in brain, thymus, kidney, and spleen.

The protein resides in the cytoplasm. Functionally, plays a role as an inducible effector molecule that mediates Fas resistance produced by surface Ig engagement in B cells. The protein is Fas apoptotic inhibitory molecule 1 (Faim) of Mus musculus (Mouse).